Consider the following 101-residue polypeptide: RNA silencing suppressor (101 aa).

Residues 47–50 (RRRR) form a basic region. The C4-type zinc finger occupies 57–78 (CPRCARVSPGFYFTTRCDGKTC).

Belongs to the carlaviruses nucleic acid-binding protein family.

Suppressor of viral-induced RNA silencing. The potential mechanism of action is based on sequestering siRNAs. The polypeptide is RNA silencing suppressor (TUC) (Dianthus caryophyllus (Carnation)).